The chain runs to 128 residues: uncharacterized protein (128 aa).

Belongs to the HesB/IscA family.

This is an uncharacterized protein from Buchnera aphidicola subsp. Baizongia pistaciae (strain Bp).